Consider the following 379-residue polypeptide: Hydrogenase expression/formation protein HupD (379 aa).

The Fe cation site is built by Cys-36, Cys-64, and Cys-67.

Belongs to the HypD family.

The polypeptide is Hydrogenase expression/formation protein HupD (hupD) (Azotobacter chroococcum mcd 1).